A 284-amino-acid polypeptide reads, in one-letter code: Bifunctional protein FolD 1 (284 aa).

NADP(+) is bound by residues 166 to 168 (GAS) and I232.

This sequence belongs to the tetrahydrofolate dehydrogenase/cyclohydrolase family. Homodimer.

The enzyme catalyses (6R)-5,10-methylene-5,6,7,8-tetrahydrofolate + NADP(+) = (6R)-5,10-methenyltetrahydrofolate + NADPH. It carries out the reaction (6R)-5,10-methenyltetrahydrofolate + H2O = (6R)-10-formyltetrahydrofolate + H(+). It participates in one-carbon metabolism; tetrahydrofolate interconversion. Functionally, catalyzes the oxidation of 5,10-methylenetetrahydrofolate to 5,10-methenyltetrahydrofolate and then the hydrolysis of 5,10-methenyltetrahydrofolate to 10-formyltetrahydrofolate. This is Bifunctional protein FolD 1 from Pseudomonas savastanoi pv. phaseolicola (strain 1448A / Race 6) (Pseudomonas syringae pv. phaseolicola (strain 1448A / Race 6)).